Consider the following 1798-residue polypeptide: U3 small nucleolar RNA-associated protein 10 (1798 aa).

The stretch at 583–620 is one HEAT 1 repeat; the sequence is LDFQALLPFLLVTLTDPSERVRREAAAALAAVGSLYKK. Transmembrane regions (helical) follow at residues 942–962 and 998–1018; these read IQSG…AIVN and ALLL…HSVM. HEAT repeat units lie at residues 1042–1079, 1249–1286, 1293–1331, and 1754–1791; these read QTID…AFEH, LTLV…QNPE, IRVL…KYGK, and ALLP…VLGE.

It belongs to the HEATR1/UTP10 family. In terms of assembly, component of the ribosomal small subunit (SSU) processome.

The protein localises to the nucleus. The protein resides in the nucleolus. It localises to the membrane. Functionally, involved in nucleolar processing of pre-18S ribosomal RNA. Involved in ribosome biosynthesis. The protein is U3 small nucleolar RNA-associated protein 10 of Aspergillus fumigatus (strain ATCC MYA-4609 / CBS 101355 / FGSC A1100 / Af293) (Neosartorya fumigata).